A 467-amino-acid chain; its full sequence is Ankyrin repeat and SOCS box protein 10 (467 aa).

ANK repeat units follow at residues 115-144 (ELTT…RPDS), 147-176 (GGRT…DPNI), 180-209 (DGKR…RVDG), 214-243 (EEET…CPDA), 247-289 (EGWT…DADA), 293-322 (DKQR…SANT), and 326-361 (GGHT…AVRV). An SOCS box domain is found at 412 to 464 (YSSLFALVRQPRSLQHLSRCALRSHLEGSLPQALPRLPLPPRLLRYLQLDFEG).

The protein belongs to the ankyrin SOCS box (ASB) family. In terms of tissue distribution, expressed in the eye. The highest expression is observed in the iris, with moderate levels in the trabecular meshwork (TM), the lamina, and the optic nerve; slightly lower levels in the ciliary body, retina, and choroid; and very low levels in the lens.

It localises to the cytoplasm. The protein resides in the nucleus. It functions in the pathway protein modification; protein ubiquitination. May be a substrate-recognition component of a SCF-like ECS (Elongin-Cullin-SOCS-box protein) E3 ubiquitin-protein ligase complex which mediates the ubiquitination and subsequent proteasomal degradation of target proteins. This is Ankyrin repeat and SOCS box protein 10 (ASB10) from Homo sapiens (Human).